Reading from the N-terminus, the 1459-residue chain is Mediator of RNA polymerase II transcription subunit 14 (1459 aa).

The interval 1-37 (MAPVQLDNHQLIPPGGGGGSSGGGGSSSGSASAPAPP) is disordered. Gly residues predominate over residues 14-27 (PGGGGGSSGGGGSS). An LXXLL motif 1 motif is present at residues 75 to 79 (LTDLL). The segment at 194 to 572 (KQATLHQLNQ…VPNKPTQLSY (379 aa)) is interaction with STAT2. The tract at residues 506–830 (LGQQRCKQSI…TKGSSISIQW (325 aa)) is interaction with SREBF1. A phosphoserine mark is found at Ser-623 and Ser-992. A disordered region spans residues 979 to 1171 (ARRRSVNEDD…NMPPPRKLPQ (193 aa)). Polar residues-rich tracts occupy residues 1029–1059 (PPTSYHSTVNQSPSMMHTQSPGNLHAASSPS) and 1097–1106 (DPSSPYTMVS). Residues Ser-1117, Ser-1124, Ser-1133, Ser-1141, and Ser-1149 each carry the phosphoserine modification. The span at 1152 to 1161 (AGTSSQTMPT) shows a compositional bias: polar residues. Residues 1187-1191 (LNILL) carry the LXXLL motif 2 motif.

This sequence belongs to the Mediator complex subunit 14 family. In terms of assembly, component of the Mediator complex, which is composed of MED1, MED4, MED6, MED7, MED8, MED9, MED10, MED11, MED12, MED13, MED13L, MED14, MED15, MED16, MED17, MED18, MED19, MED20, MED21, MED22, MED23, MED24, MED25, MED26, MED27, MED29, MED30, MED31, CCNC, CDK8 and CDC2L6/CDK11. The MED12, MED13, CCNC and CDK8 subunits form a distinct module termed the CDK8 module. Mediator containing the CDK8 module is less active than Mediator lacking this module in supporting transcriptional activation. Individual preparations of the Mediator complex lacking one or more distinct subunits have been variously termed ARC, CRSP, DRIP, PC2, SMCC and TRAP. Interacts with AR, ESR1, SREBF1 and STAT2. Interacts with GATA1.

It localises to the nucleus. Component of the Mediator complex, a coactivator involved in the regulated transcription of nearly all RNA polymerase II-dependent genes. Mediator functions as a bridge to convey information from gene-specific regulatory proteins to the basal RNA polymerase II transcription machinery. Mediator is recruited to promoters by direct interactions with regulatory proteins and serves as a scaffold for the assembly of a functional preinitiation complex with RNA polymerase II and the general transcription factors. The polypeptide is Mediator of RNA polymerase II transcription subunit 14 (Med14) (Mus musculus (Mouse)).